We begin with the raw amino-acid sequence, 93 residues long: YcgL domain-containing protein Shew_2183 (93 aa).

The 85-residue stretch at 1–85 folds into the YcgL domain; it reads MICAVYKSRL…PPVNLLEEYK (85 aa).

The protein is YcgL domain-containing protein Shew_2183 of Shewanella loihica (strain ATCC BAA-1088 / PV-4).